A 4544-amino-acid polypeptide reads, in one-letter code: Prolow-density lipoprotein receptor-related protein 1 (4544 aa).

Residues 1–19 (MLTPPLLLLLPLLSALVAA) form the signal peptide. The Extracellular portion of the chain corresponds to 20 to 4419 (AIDAPKTCSP…EHVFSQQQPG (4400 aa)). 2 consecutive LDL-receptor class A domains span residues 25–66 (KTCS…ICPQ) and 70–110 (QRCQ…HCRE). 6 cysteine pairs are disulfide-bonded: C27/C40, C34/C53, C47/C64, C72/C85, C79/C98, and C92/C108. The region spanning 111-149 (LQGNCSRLGCQHHCVPTLDGPTCYCNSSFQLQADGKTCK) is the EGF-like 1 domain. An N-linked (GlcNAc...) asparagine glycan is attached at N114. 6 disulfides stabilise this stretch: C115–C124, C120–C133, C135–C148, C154–C164, C160–C173, and C175–C188. N136 carries an N-linked (GlcNAc...) asparagine glycan. Residues 150 to 189 (DFDECSVYGTCSQLCTNTDGSFICGCVEGYLLQPDNRSCK) enclose the EGF-like 2; calcium-binding domain. Residues N185, N239, and N274 are each glycosylated (N-linked (GlcNAc...) asparagine). LDL-receptor class B repeat units lie at residues 292 to 334 (GNFY…DPAM), 335 to 378 (GKVF…DLVS), and 379 to 422 (RLVY…FENY). N357 carries N-linked (GlcNAc...) asparagine glycosylation. N-linked (GlcNAc...) asparagine glycosylation occurs at N446. In terms of domain architecture, EGF-like 3 spans 474–520 (RSHACENDQYGKPGGCSDICLLANSHKARTCRCRSGFSLGSDGKSCK). Disulfide bonds link C478–C493, C489–C504, and C506–C519. LDL-receptor class B repeat units lie at residues 571-613 (GFIY…DWMG), 614-659 (DNLY…DPLN), 660-710 (GWMY…DIPA), and 711-754 (GRLY…HGNY). Residue N729 is glycosylated (N-linked (GlcNAc...) (complex) asparagine). One can recognise an EGF-like 4 domain in the interval 803–843 (GTNKCRVNNGGCSSLCLATPGSRQCACAEDQVLDADGVTCL). Intrachain disulfides connect C807–C818, C814–C827, C829–C842, C854–C866, C861–C879, C873–C890, C895–C907, C902–C920, C914–C931, C936–C948, C943–C961, C955–C971, C976–C989, C984–C1002, C996–C1011, C1015–C1027, C1022–C1040, C1034–C1051, C1062–C1075, C1069–C1088, C1082–C1097, C1104–C1118, C1112–C1131, C1125–C1140, C1145–C1159, C1152–C1172, C1166–C1182, C1185–C1196, C1192–C1206, C1208–C1221, C1227–C1237, C1233–C1246, and C1248–C1261. 8 consecutive LDL-receptor class A domains span residues 852–892 (PQCQ…LCHQ), 893–933 (HTCP…TCSA), 934–973 (RTCP…SCAY), 974–1013 (PTCF…GCSH), 1013–1053 (HSCS…NCTN), 1060–1099 (GGCH…SCEG), 1102–1142 (HVCD…NCES), and 1143–1182 (LACR…GELC). The Ca(2+) site is built by W871, D874, D876, D878, D884, and E885. The N-linked (GlcNAc...) asparagine glycan is linked to N928. W1032, D1035, D1037, D1039, D1045, and E1046 together coordinate Ca(2+). The N-linked (GlcNAc...) asparagine glycan is linked to N1050. Residues W1080, D1083, D1085, D1087, D1093, and E1094 each contribute to the Ca(2+) site. N-linked (GlcNAc...) asparagine glycosylation is found at N1154 and N1155. EGF-like domains lie at 1183–1222 (DQCS…HTCQ) and 1223–1262 (IQSY…ESCR). 2 N-linked (GlcNAc...) asparagine glycosylation sites follow: N1195 and N1218. 5 LDL-receptor class B repeats span residues 1309–1355 (SALY…DWIA), 1356–1398 (GNIY…DPRD), 1399–1445 (GILF…DYLE), 1446–1490 (KRIL…YGGE), and 1491–1531 (VYWT…YHPS). An N-linked (GlcNAc...) (complex) asparagine glycan is attached at N1511. The 44-residue stretch at 1536-1579 (APNPCEANGGQGPCSHLCLINYNRTVSCACPHLMKLHKDNTTCY) folds into the EGF-like 7 domain. Cystine bridges form between C1540/C1553, C1549/C1563, and C1565/C1578. N-linked (GlcNAc...) asparagine glycosylation is found at N1558, N1575, N1616, and N1645. LDL-receptor class B repeat units follow at residues 1627–1669 (QRVY…DWVS), 1670–1713 (RNLF…HPLR), 1714–1753 (GKLY…DFPE), and 1754–1798 (SKLY…MGDK). N-linked (GlcNAc...) asparagine glycans are attached at residues N1723, N1733, N1763, and N1825. Residues 1846-1887 (GTNPCSVNNGDCSQLCLPTSETTRSCMCTAGYSLRSGQQACE) form the EGF-like 8 domain. 3 disulfides stabilise this stretch: C1850–C1861, C1857–C1871, and C1873–C1886. The N-linked (GlcNAc...) asparagine glycan is linked to N1933. LDL-receptor class B repeat units follow at residues 1934 to 1976 (DTIY…DWIA), 1977 to 2019 (GNIY…HPEK), 2020 to 2063 (GYLF…DYQD), and 2064 to 2107 (GKLY…FEDF). An N-linked (GlcNAc...) asparagine glycan is attached at N1995. K2009 carries the post-translational modification N6-acetyllysine. N2048 carries an N-linked (GlcNAc...) asparagine glycan. 2 N-linked (GlcNAc...) asparagine glycosylation sites follow: N2117 and N2127. The 41-residue stretch at 2155–2195 (GTNVCAVANGGCQQLCLYRGRGQRACACAHGMLAEDGASCR) folds into the EGF-like 9 domain. 3 disulfides stabilise this stretch: C2159-C2170, C2166-C2180, and C2182-C2194. 5 LDL-receptor class B repeats span residues 2253-2294 (NRIF…HRGW), 2295-2343 (DTLY…DECQ), 2344-2388 (NLMF…DHRA), 2389-2431 (EKLY…YGEH), and 2432-2473 (IFWT…VAND). N-linked (GlcNAc...) asparagine glycosylation occurs at N2472. An EGF-like 10 domain is found at 2478–2518 (ELSPCRINNGGCQDLCLLTHQGHVNCSCRGGRILQDDLTCR). Cystine bridges form between C2482–C2493, C2489–C2503, and C2505–C2517. The N-linked (GlcNAc...) asparagine glycan is linked to N2502. An N-linked (GlcNAc...) asparagine glycan is attached at N2521. 7 LDL-receptor class A domains span residues 2522-2563 (SSCR…YCNS), 2564-2602 (RRCK…PCNK), 2603-2641 (TACG…NCSA), 2642-2690 (TDCS…DCPG), 2694-2732 (PRCP…HCNK), 2732-2771 (KFCS…HCEG), and 2772-2814 (KTCG…GCLY). Intrachain disulfides connect C2524/C2537, C2532/C2550, C2544/C2561, C2566/C2578, C2573/C2591, and C2585/C2600. An N-linked (GlcNAc...) asparagine glycan is attached at N2539. N-linked (GlcNAc...) asparagine glycosylation occurs at N2601. Cystine bridges form between C2605/C2617, C2612/C2630, C2624/C2639, C2644/C2666, C2660/C2679, C2673/C2688, C2696/C2708, C2703/C2721, C2715/C2730, C2734/C2746, C2741/C2759, C2753/C2769, C2774/C2787, C2781/C2800, and C2794/C2812. N-linked (GlcNAc...) asparagine glycans are attached at residues N2620 and N2638. N2815 carries N-linked (GlcNAc...) asparagine glycosylation. 3 LDL-receptor class A domains span residues 2816 to 2855 (STCD…ECEY), 2856 to 2899 (PTCG…HCTS), and 2902 to 2940 (HKCN…RGCH). Intrachain disulfides connect C2818–C2830, C2825–C2843, C2837–C2853, C2858–C2870, C2865–C2884, C2878–C2897, C2904–C2917, C2912–C2930, C2924–C2939, C2944–C2956, C2952–C2965, C2967–C2980, C2986–C2996, C2992–C3005, and C3007–C3021. Residue N2905 is glycosylated (N-linked (GlcNAc...) asparagine). Positions 2941–2981 (INECLSRKLSGCSQDCEDLKIGFKCRCRPGFRLKDDGRTCA) constitute an EGF-like 11 domain. The 41-residue stretch at 2982 to 3022 (DVDECSTTFPCSQRCINTHGSYKCLCVEGYAPRGGDPHSCK) folds into the EGF-like 12; calcium-binding domain. Residues N3048 and N3089 are each glycosylated (N-linked (GlcNAc...) asparagine). LDL-receptor class B repeat units lie at residues 3069 to 3113 (QMIY…DWVG), 3114 to 3156 (GNLY…DVQN), 3157 to 3200 (GYLY…DYVT), 3201 to 3243 (ERIY…FEDY), and 3244 to 3284 (VYWT…FHAL). An N-linked (GlcNAc...) asparagine glycan is attached at N3264. Residues 3290–3331 (PNHPCKVNNGGCSNLCLLSPGGGHKCACPTNFYLGSDGRTCV) form the EGF-like 13 domain. Intrachain disulfides connect C3294–C3305, C3301–C3315, and C3317–C3330. LDL-receptor class A domains follow at residues 3332 to 3371 (SNCT…DCPE), 3372 to 3410 (FKCR…NCDI), 3411 to 3450 (HVCL…DCPE), 3451 to 3491 (VTCA…NCTQ), 3492 to 3533 (MTCG…ECDE), 3534 to 3572 (RTCE…SCTP), 3573 to 3611 (RPCS…DCTP), 3611 to 3649 (PRCD…ACGT), 3652 to 3692 (RTCP…ECAR), 3693 to 3733 (FVCP…DCEP), and 3739 to 3778 (THCK…DCSI). A glycan (N-linked (GlcNAc...) asparagine) is linked at N3333. 39 disulfides stabilise this stretch: C3334–C3346, C3341–C3359, C3353–C3369, C3374–C3386, C3381–C3399, C3393–C3408, C3413–C3426, C3420–C3439, C3433–C3448, C3453–C3466, C3460–C3479, C3473–C3489, C3494–C3507, C3501–C3520, C3514–C3531, C3536–C3548, C3543–C3561, C3555–C3570, C3575–C3587, C3582–C3600, C3594–C3609, C3613–C3625, C3620–C3638, C3632–C3647, C3654–C3666, C3661–C3679, C3673–C3690, C3695–C3709, C3703–C3722, C3716–C3731, C3741–C3754, C3749–C3767, C3761–C3776, C3785–C3798, C3792–C3807, C3809–C3822, C3828–C3838, C3834–C3847, and C3849–C3860. N-linked (GlcNAc...) asparagine glycosylation occurs at N3488. A glycan (N-linked (GlcNAc...) asparagine) is linked at N3662. EGF-like domains follow at residues 3781 to 3823 (KLTS…PGCQ) and 3824 to 3861 (DINE…NTCK). N-linked (GlcNAc...) asparagine glycosylation is present at N3788. An N-linked (GlcNAc...) asparagine glycan is attached at N3839. LDL-receptor class B repeat units lie at residues 3912–3954 (GRVY…HLNI), 3970–4012 (GNVY…DPLR), 4013–4056 (GTMY…DYHN), and 4057–4101 (ERLY…FEDY). The short motif at 3940–3943 (RHRR) is the Recognition site for proteolytical processing element. N3953 carries an N-linked (GlcNAc...) asparagine glycan. Residues N4075 and N4125 are each glycosylated (N-linked (GlcNAc...) asparagine). 7 EGF-like domains span residues 4147 to 4183 (VTNP…GTCV), 4196 to 4232 (RPGT…DKCE), 4232 to 4268 (ELDQ…PKCT), 4268 to 4304 (TQQV…DRCQ), 4304 to 4340 (QYRQ…SRCE), 4340 to 4375 (EVNK…PSCL), and 4373 to 4409 (SCLT…PRCE). 17 cysteine pairs are disulfide-bonded: C4151–C4160, C4156–C4169, C4171–C4182, C4200–C4210, C4204–C4220, C4222–C4231, C4236–C4246, C4240–C4256, C4258–C4267, C4272–C4282, C4276–C4292, C4294–C4303, C4308–C4318, C4312–C4328, C4330–C4339, C4344–C4352, and C4347–C4363. An N-linked (GlcNAc...) asparagine glycan is attached at N4179. 2 N-linked (GlcNAc...) asparagine glycosylation sites follow: N4278 and N4279. The N-linked (GlcNAc...) asparagine glycan is linked to N4364. 4 disulfides stabilise this stretch: C4365-C4374, C4377-C4387, C4381-C4397, and C4399-C4408. Residues 4420-4444 (HIASILIPLLLLLLLVLVAGVVFWY) form a helical membrane-spanning segment. Over 4445–4544 (KRRVQGAKGF…PEDEIGDPLA (100 aa)) the chain is Cytoplasmic. The tract at residues 4445-4544 (KRRVQGAKGF…PEDEIGDPLA (100 aa)) is interaction with MAFB. T4460 is modified (phosphothreonine). The NPXY motif motif lies at 4502–4507 (FTNPVY). The residue at position 4507 (Y4507) is a Phosphotyrosine. Phosphoserine is present on residues S4517, S4520, and S4523.

It belongs to the LDLR family. In terms of assembly, heterodimer of an 85-kDa membrane-bound carboxyl subunit and a non-covalently attached 515-kDa N-terminal subunit. Intracellular domain interacts with MAFB. Found in a complex with PID1/PCLI1, LRP1 and CUBNI. Interacts with SNX17, PID1/PCLI1, PDGF and CUBN. The intracellular domain interacts with SHC1, GULP1 and DAB1. Can weakly interact (via NPXY motif) with DAB2 (via PID domain); the interaction is enhanced by tyrosine phosphorylation of the NPXY motif. Interacts with MDK; promotes neuronal survival. Interacts with LRPAP1; this interaction is followed by rapid internalization. Interacts with uPA/PLAU and PAI1/SERPINE1, either individually or in complex with each other, leading to rapid endocytosis; this interaction is abolished in the presence of LRPAP1/RAP. Also interacts with tPA/PLAT alone or in complex with SERPINE1. Interacts with the urokinase receptor PLAUR; this interaction leads to PLAUR internalization and is impaired in the presence of SORL1. Interacts with PDGFB. Interacts with TAU/MAPT, leading to endocytosis; this interaction is reduced in the presence of LRPAP1/RAP. Interacts with IGFBP3; this interaction mediates cell growth inhibition independently of IGF1. Interacts with ADGRG6. (Microbial infection) Interacts with bacterial exotoxins. As to quaternary structure, (Microbial infection) Interacts with Rift valley fever virus (RVFV) glycoprotein N; this interaction facilitates virus entry. In terms of processing, cleaved into a 85 kDa membrane-spanning subunit (LRP-85) and a 515 kDa large extracellular domain (LRP-515) that remains non-covalently associated. Gamma-secretase-dependent cleavage of LRP-85 releases the intracellular domain from the membrane. Post-translationally, the N-terminus is blocked. Phosphorylated on serine and threonine residues. In terms of processing, phosphorylated on tyrosine residues upon stimulation with PDGF. Tyrosine phosphorylation promotes interaction with SHC1. As to expression, most abundant in liver, brain and lung.

The protein localises to the cell membrane. It localises to the membrane. Its subcellular location is the coated pit. The protein resides in the cytoplasm. It is found in the nucleus. The protein localises to the golgi outpost. It localises to the cytoskeleton. Its subcellular location is the microtubule organizing center. Functionally, endocytic receptor involved in endocytosis and in phagocytosis of apoptotic cells. Required for early embryonic development. Involved in cellular lipid homeostasis. Involved in the plasma clearance of chylomicron remnants and activated LRPAP1 (alpha 2-macroglobulin), as well as the local metabolism of complexes between plasminogen activators and their endogenous inhibitors. Acts as an LRPAP1 alpha-2-macroglobulin receptor. Acts as TAU/MAPT receptor and controls the endocytosis of TAU/MAPT as well as its subsequent spread. May modulate cellular events, such as APP metabolism, kinase-dependent intracellular signaling, neuronal calcium signaling as well as neurotransmission. Also acts as a receptor for IGFBP3 to mediate cell growth inhibition. (Microbial infection) Functions as a receptor for Pseudomonas aeruginosa exotoxin A. This is Prolow-density lipoprotein receptor-related protein 1 from Homo sapiens (Human).